Here is a 407-residue protein sequence, read N- to C-terminus: Phospholipid-transporting ATPase accessory subunit CDC50 (407 aa).

The interval 1–33 (MAPRRRRGAGQDGSDDGRSDSDAPKNRPPNTAF) is disordered. The Cytoplasmic portion of the chain corresponds to 1–48 (MAPRRRRGAGQDGSDDGRSDSDAPKNRPPNTAFRQQRMRAWQCVLTPK). Residues 15–25 (DDGRSDSDAPK) show a composition bias toward basic and acidic residues. A helical membrane pass occupies residues 49–69 (LIVTVFSILAAIYLGFGAWLT). Topologically, residues 70–359 (YLAHTVRDLK…TMGSRNIWPG (290 aa)) are extracellular. The cysteines at positions 85 and 139 are disulfide-linked. N-linked (GlcNAc...) asparagine glycosylation is found at Asn131 and Asn189. Cys193 and Cys210 form a disulfide bridge. Residues Asn219, Asn232, Asn241, and Asn314 are each glycosylated (N-linked (GlcNAc...) asparagine). A helical transmembrane segment spans residues 360–380 (IIFLIVGGICLVLDIYFILSF). Topologically, residues 381–407 (FIWRPRKLGDPSYLSWNQPSAPGGHSS) are cytoplasmic.

It belongs to the CDC50/LEM3 family. Component of a flippase complex consisting of DNF1 and CDC50. Interacts with DNF1; the interaction is direct.

The protein resides in the cell membrane. Its function is as follows. Accessory component of a P4-ATPase flippase complex which catalyzes the hydrolysis of ATP coupled to the transport of phosphatidylcholine and phosphatidylserine from the lumen to the cytosolic leaflet of membranes and ensures the maintenance of asymmetric distribution of phospholipids. The chain is Phospholipid-transporting ATPase accessory subunit CDC50 from Chaetomium thermophilum (strain DSM 1495 / CBS 144.50 / IMI 039719) (Thermochaetoides thermophila).